Consider the following 507-residue polypeptide: Maturase K (507 aa).

This sequence belongs to the intron maturase 2 family. MatK subfamily.

It is found in the plastid. The protein localises to the chloroplast. In terms of biological role, usually encoded in the trnK tRNA gene intron. Probably assists in splicing its own and other chloroplast group II introns. This chain is Maturase K, found in Lyonia ferruginea (Rusty staggerbush).